The primary structure comprises 123 residues: Seminal vesicle secretory protein 5 (123 aa).

The first 21 residues, 1 to 21 (MSPTGFFLLTVLLVLVTEAAS), serve as a signal peptide directing secretion. Residues 50-123 (GSSSTFGAFS…TKVKTRITRK (74 aa)) are disordered. Over residues 64 to 75 (SRSNFKSKSPSS) the composition is skewed to low complexity. A compositionally biased stretch (basic and acidic residues) spans 77 to 87 (TREKVNEESRS).

Belongs to the SVP2/SVP5/SVP6 family. As to expression, testis.

It localises to the secreted. The protein localises to the extracellular space. The polypeptide is Seminal vesicle secretory protein 5 (Svs5) (Rattus norvegicus (Rat)).